Consider the following 307-residue polypeptide: Thiohydrolase apmlB (307 aa).

Belongs to the polyketide transferase af380 family.

Thiohydrolase; part of the gene cluster that mediates the biosynthesis of phaeospelide A, a fungal polyene macrolide with a 34-membered macrolactone ring and an all-trans conjugated hexaene structure. The HR-PKS ApmlA uses acetyl-CoA and malonyl-CoA as its starter and extender units, respectively, and provides the large carbon framework in phaeospelide via 16 cycles of polyketide chain elongation, which is the largest number identified in fungal iterative PKSs thus far. During round 1, the KR domain reduces beta -ketone to an L-oriented hydroxy group, while during later rounds, it provides hydroxy groups in the D-configuration. The characteristic conjugated hexaene moiety is built during the later rounds (10-15), when the KR and DH domains are at work but ER is off. Phylogenetic analysis of the DH domain suggests that a polyene formation is programmed in the DH domain. Finally, the mature ACP-tethered carbon chain is transferred to the serine residue of the thiohydrolase apmlB, followed by intramolecular macrolactonization, generating phaeospelide A. When one elongation cycle during rounds 7-9 is skipped, phaeospelide B is biosynthesized instead. This Arthrinium phaeospermum (Gymnosporium phaeospermum) protein is Thiohydrolase apmlB.